Consider the following 234-residue polypeptide: Uridylate kinase (234 aa).

ATP is bound at residue 9–12; that stretch reads KLSG. G51 is a binding site for UMP. ATP contacts are provided by G52 and R56. UMP contacts are provided by residues D71 and 132–139; that span reads CGNPFFTT. Residues T159, Y165, and D168 each coordinate ATP.

Belongs to the UMP kinase family. Homohexamer.

The protein resides in the cytoplasm. It carries out the reaction UMP + ATP = UDP + ADP. It functions in the pathway pyrimidine metabolism; CTP biosynthesis via de novo pathway; UDP from UMP (UMPK route): step 1/1. Its activity is regulated as follows. Inhibited by UTP. Functionally, catalyzes the reversible phosphorylation of UMP to UDP. The sequence is that of Uridylate kinase from Prochlorococcus marinus (strain MIT 9215).